We begin with the raw amino-acid sequence, 57 residues long: Large ribosomal subunit protein bL33 (57 aa).

It belongs to the bacterial ribosomal protein bL33 family.

In Shewanella denitrificans (strain OS217 / ATCC BAA-1090 / DSM 15013), this protein is Large ribosomal subunit protein bL33.